A 544-amino-acid chain; its full sequence is Dynein intermediate chain 1 (544 aa).

6 WD repeats span residues 241-281, 289-330, 342-387, 402-441, 461-501, and 506-544; these read KARS…YPVS, GHLE…RPSE, SQCI…QPSN, VMTSNSQNVFLEKNKDFALTSSFDWTVRLWQCSPSRNQHE, THKA…EAPV, and PDGKPLNKIAWQPEKRNLACGGLNGNVHIYKHLSPNLAN.

It belongs to the dynein intermediate chain family.

Its subcellular location is the cytoplasm. Has a role in meiotic nuclear divsion where it promotes the movement of 'horsetails'. The polypeptide is Dynein intermediate chain 1 (dic1) (Schizosaccharomyces pombe (strain 972 / ATCC 24843) (Fission yeast)).